The chain runs to 149 residues: D-aminoacyl-tRNA deacylase (149 aa).

The short motif at 137-138 (GP) is the Gly-cisPro motif, important for rejection of L-amino acids element.

It belongs to the DTD family. Homodimer.

It is found in the cytoplasm. It carries out the reaction glycyl-tRNA(Ala) + H2O = tRNA(Ala) + glycine + H(+). The enzyme catalyses a D-aminoacyl-tRNA + H2O = a tRNA + a D-alpha-amino acid + H(+). An aminoacyl-tRNA editing enzyme that deacylates mischarged D-aminoacyl-tRNAs. Also deacylates mischarged glycyl-tRNA(Ala), protecting cells against glycine mischarging by AlaRS. Acts via tRNA-based rather than protein-based catalysis; rejects L-amino acids rather than detecting D-amino acids in the active site. By recycling D-aminoacyl-tRNA to D-amino acids and free tRNA molecules, this enzyme counteracts the toxicity associated with the formation of D-aminoacyl-tRNA entities in vivo and helps enforce protein L-homochirality. In Syntrophotalea carbinolica (strain DSM 2380 / NBRC 103641 / GraBd1) (Pelobacter carbinolicus), this protein is D-aminoacyl-tRNA deacylase.